The following is a 335-amino-acid chain: MLKNNINDSKNLDRTFSIAPMLDWTDRHYRYFARLMSANALLYTEMVTTGAILHGRGDYLTYNQEEHPLALQLGGSNPVELARCAKLAAERGYDEVNLNVGCPSDRVQNGRFGACLMAEPELVAECVDAMKQVVDIPVTVKTRIGIDEQDSYEFLTHFIDTVMAKGCGEFIIHARKAWLQGLSPKENREIPPLDYDRVYQLKRDYPALNISINGGITSLEQAQTHLQHLDGVMVGREAYQNPYMLAQVDQVLCGSTKAVMSREAVIEAMLPYIEAHLQVGGRLNHITRHMIGLFQGLPGARAWRRYLSENAHKNGAGIEVVKLAYQSVQTDLVAQ.

Residues 20 to 22 (PML) and Gln-72 each bind FMN. Cys-102 serves as the catalytic Proton donor. FMN contacts are provided by residues Lys-141, His-173, 213 to 215 (NGG), and 235 to 236 (GR).

The protein belongs to the Dus family. DusA subfamily. The cofactor is FMN.

The enzyme catalyses 5,6-dihydrouridine(20) in tRNA + NADP(+) = uridine(20) in tRNA + NADPH + H(+). It carries out the reaction 5,6-dihydrouridine(20) in tRNA + NAD(+) = uridine(20) in tRNA + NADH + H(+). The catalysed reaction is 5,6-dihydrouridine(20a) in tRNA + NADP(+) = uridine(20a) in tRNA + NADPH + H(+). It catalyses the reaction 5,6-dihydrouridine(20a) in tRNA + NAD(+) = uridine(20a) in tRNA + NADH + H(+). Its function is as follows. Catalyzes the synthesis of 5,6-dihydrouridine (D), a modified base found in the D-loop of most tRNAs, via the reduction of the C5-C6 double bond in target uridines. Specifically modifies U20 and U20a in tRNAs. This Shewanella oneidensis (strain ATCC 700550 / JCM 31522 / CIP 106686 / LMG 19005 / NCIMB 14063 / MR-1) protein is tRNA-dihydrouridine(20/20a) synthase.